The following is a 248-amino-acid chain: Probable transcriptional regulatory protein RHOS4_22610 (248 aa).

The tract at residues 1–21 is disordered; it reads MAGHSKWANIQHRKGKQDKLR.

It belongs to the TACO1 family.

The protein localises to the cytoplasm. The chain is Probable transcriptional regulatory protein RHOS4_22610 from Cereibacter sphaeroides (strain ATCC 17023 / DSM 158 / JCM 6121 / CCUG 31486 / LMG 2827 / NBRC 12203 / NCIMB 8253 / ATH 2.4.1.) (Rhodobacter sphaeroides).